The chain runs to 172 residues: Large ribosomal subunit protein eL20 (172 aa).

It belongs to the eukaryotic ribosomal protein eL20 family. In terms of assembly, component of the large ribosomal subunit. Mature ribosomes consist of a small (40S) and a large (60S) subunit. The 40S subunit contains about 32 different proteins and 1 molecule of RNA (18S). The 60S subunit contains 45 different proteins and 3 molecules of RNA (25S, 5.8S and 5S).

Its subcellular location is the cytoplasm. In terms of biological role, component of the ribosome, a large ribonucleoprotein complex responsible for the synthesis of proteins in the cell. The small ribosomal subunit (SSU) binds messenger RNAs (mRNAs) and translates the encoded message by selecting cognate aminoacyl-transfer RNA (tRNA) molecules. The large subunit (LSU) contains the ribosomal catalytic site termed the peptidyl transferase center (PTC), which catalyzes the formation of peptide bonds, thereby polymerizing the amino acids delivered by tRNAs into a polypeptide chain. The nascent polypeptides leave the ribosome through a tunnel in the LSU and interact with protein factors that function in enzymatic processing, targeting, and the membrane insertion of nascent chains at the exit of the ribosomal tunnel. This chain is Large ribosomal subunit protein eL20, found in Candida albicans (strain SC5314 / ATCC MYA-2876) (Yeast).